The sequence spans 628 residues: Probable alpha-L-arabinofuranosidase A (628 aa).

An N-terminal signal peptide occupies residues 1 to 25; the sequence is MVAFSALSGVSALSLLLCLVQHAHG. 8 N-linked (GlcNAc...) asparagine glycosylation sites follow: Asn36, Asn51, Asn74, Asn152, Asn171, Asn260, Asn359, and Asn493.

This sequence belongs to the glycosyl hydrolase 51 family.

It is found in the secreted. The enzyme catalyses Hydrolysis of terminal non-reducing alpha-L-arabinofuranoside residues in alpha-L-arabinosides.. The protein operates within glycan metabolism; L-arabinan degradation. In terms of biological role, alpha-L-arabinofuranosidase involved in the degradation of arabinoxylan, a major component of plant hemicellulose. Acts only on small linear 1,5-alpha-linked L-arabinofuranosyl oligosaccharides. The chain is Probable alpha-L-arabinofuranosidase A (abfA) from Aspergillus awamori (Black koji mold).